The following is a 211-amino-acid chain: Urease accessory protein UreG (211 aa).

16 to 23 (GPVGSGKT) provides a ligand contact to GTP.

It belongs to the SIMIBI class G3E GTPase family. UreG subfamily. Homodimer. UreD, UreF and UreG form a complex that acts as a GTP-hydrolysis-dependent molecular chaperone, activating the urease apoprotein by helping to assemble the nickel containing metallocenter of UreC. The UreE protein probably delivers the nickel.

It localises to the cytoplasm. Functionally, facilitates the functional incorporation of the urease nickel metallocenter. This process requires GTP hydrolysis, probably effectuated by UreG. The chain is Urease accessory protein UreG from Janthinobacterium sp. (strain Marseille) (Minibacterium massiliensis).